The following is a 1000-amino-acid chain: Receptor-type tyrosine-protein kinase FLT3 (1000 aa).

The signal sequence occupies residues 1–27 (MRALAQRSDRRLLLLVVLSVMILETVT). At 28–544 (NQDLPVIKCV…PFPFIQDNIS (517 aa)) the chain is on the extracellular side. 2 disulfides stabilise this stretch: C36/C66 and C104/C115. The N-linked (GlcNAc...) asparagine glycan is linked to N44. Positions 45 to 67 (GSSAGKPSSYRMVRGSPEDLQCT) are disordered. N-linked (GlcNAc...) asparagine glycosylation is found at N133 and N152. 2 disulfide bridges follow: C200-C207 and C273-C331. An Ig-like C2-type domain is found at 254-344 (PQSTLPQLFL…KHPSQSALVT (91 aa)). N307, N324, and N352 each carry an N-linked (GlcNAc...) asparagine glycan. 2 cysteine pairs are disulfide-bonded: C369–C408 and C382–C393. N445, N474, N503, and N542 each carry an N-linked (GlcNAc...) asparagine glycan. A helical membrane pass occupies residues 545–564 (FYATIGLCLPFIVVLIVLIC). At 565-992 (HKYKKQFRYE…GSEPPSPQAQ (428 aa)) the chain is on the cytoplasmic side. Y573 carries the phosphotyrosine modification. S575 carries the post-translational modification Phosphoserine. A phosphotyrosine; by autocatalysis mark is found at Y590 and Y592. Positions 592–598 (YVDFRDY) are important for normal regulation of the kinase activity and for maintaining the kinase in an inactive state in the absence of ligand binding. A Phosphotyrosine modification is found at Y600. The 336-residue stretch at 611 to 946 (LEFGKVLGSG…PSFPNLTSFL (336 aa)) folds into the Protein kinase domain. ATP-binding positions include 617–625 (LGSGAFGRV) and K645. Y727 is subject to Phosphotyrosine; by autocatalysis. A Phosphoserine modification is found at S760. A phosphotyrosine mark is found at Y769 and Y796. D814 serves as the catalytic Proton acceptor. Y845 carries the post-translational modification Phosphotyrosine; by autocatalysis. Residues Y958 and Y972 each carry the phosphotyrosine modification. The tract at residues 968–1000 (HPSIYQNRRPLSREAGSEPPSPQAQVKIHRERS) is disordered. S1000 carries the phosphoserine modification.

This sequence belongs to the protein kinase superfamily. Tyr protein kinase family. CSF-1/PDGF receptor subfamily. As to quaternary structure, monomer in the absence of bound FLT3LG. Homodimer in the presence of bound FLT3LG. Interacts with FIZ1 following ligand activation. Interacts with FES, FER, LYN, FGR, HCK, SRC and GRB2. Interacts with PTPRJ/DEP-1 and PTPN11/SHP2. Interacts with RNF115 and RNF126. In terms of processing, N-glycosylated, contains complex N-glycans with sialic acid. Autophosphorylated on several tyrosine residues in response to FLT3LG binding. FLT3LG binding also increases phosphorylation of mutant kinases that are constitutively activated. Dephosphorylated by PTPRJ/DEP-1, PTPN1, PTPN6/SHP-1, and to a lesser degree by PTPN12. Dephosphorylation is important for export from the endoplasmic reticulum and location at the cell membrane. Post-translationally, rapidly ubiquitinated by UBE2L6 and the E3 ubiquitin-protein ligase SIAH1 after autophosphorylation, leading to its proteasomal degradation. In terms of tissue distribution, hematopoietic stem and progenitor cell-enriched populations. Found in brain, placenta and testis.

It is found in the membrane. The protein localises to the endoplasmic reticulum lumen. It catalyses the reaction L-tyrosyl-[protein] + ATP = O-phospho-L-tyrosyl-[protein] + ADP + H(+). With respect to regulation, present in an inactive conformation in the absence of bound ligand. FLT3LG binding leads to dimerization and activation by autophosphorylation. Tyrosine-protein kinase that acts as a cell-surface receptor for the cytokine FLT3LG and regulates differentiation, proliferation and survival of hematopoietic progenitor cells and of dendritic cells. Promotes phosphorylation of SHC1 and AKT1, and activation of the downstream effector MTOR. Promotes activation of RAS signaling and phosphorylation of downstream kinases, including MAPK1/ERK2 and/or MAPK3/ERK1. Promotes phosphorylation of FES, FER, PTPN6/SHP, PTPN11/SHP-2, PLCG1, and STAT5A and/or STAT5B. Activation of wild-type FLT3 causes only marginal activation of STAT5A or STAT5B. Mutations that cause constitutive kinase activity promote cell proliferation and resistance to apoptosis via the activation of multiple signaling pathways. In Mus musculus (Mouse), this protein is Receptor-type tyrosine-protein kinase FLT3 (Flt3).